We begin with the raw amino-acid sequence, 132 residues long: MAGTASAREALGRFGEELAAQHLQTLGMTILARNWRCRSGELDIVARDGYTLVVCEVKTRRGVGFGEPLESVTPRKAARLRQLAVAWLTEHAATRVDTTEGTHGYTAVRFDVVAILHRKEDGPTIEYVRGAF.

Belongs to the UPF0102 family.

The polypeptide is UPF0102 protein Acel_1550 (Acidothermus cellulolyticus (strain ATCC 43068 / DSM 8971 / 11B)).